We begin with the raw amino-acid sequence, 105 residues long: U7-hexatoxin-Hi1a (105 aa).

The N-terminal stretch at 1–23 (MKTILLFLGVCAVGASMMTGGWT) is a signal peptide.

Belongs to the cystatin family. In terms of processing, contains 2 disulfide bonds. In terms of tissue distribution, expressed by the venom gland.

The protein localises to the secreted. In terms of biological role, inhibits various C1 cysteine proteases. This protein has no toxic activity and its function in the venom is unknown. It may play a role as a housekeeping or regulatory protein. This chain is U7-hexatoxin-Hi1a, found in Hadronyche infensa (Fraser island funnel-web spider).